The primary structure comprises 440 residues: Adenylyltransferase and sulfurtransferase UBA4 (440 aa).

N-acetylmethionine is present on methionine 1. ATP contacts are provided by residues glycine 77, aspartate 98, 105–109, lysine 122, and 166–167; these read SNLHR and DS. Zn(2+) contacts are provided by cysteine 208 and cysteine 211. Cysteine 225 (glycyl thioester intermediate; for adenylyltransferase activity) is an active-site residue. The Zn(2+) site is built by cysteine 286 and cysteine 289. Serine 326 bears the Phosphoserine mark. In terms of domain architecture, Rhodanese spans 339 to 438; the sequence is FLAKHIFLDV…YIDDIDQTIP (100 aa). The active-site Cysteine persulfide intermediate; for sulfurtransferase activity is the cysteine 397.

The protein in the N-terminal section; belongs to the HesA/MoeB/ThiF family. UBA4 subfamily. Zn(2+) serves as cofactor.

The protein localises to the cytoplasm. It localises to the cytosol. It functions in the pathway tRNA modification; 5-methoxycarbonylmethyl-2-thiouridine-tRNA biosynthesis. Plays a central role in 2-thiolation of mcm(5)S(2)U at tRNA wobble positions of cytosolic tRNA(Lys), tRNA(Glu) and tRNA(Gln). Acts by mediating the C-terminal thiocarboxylation of sulfur carrier URM1. Its N-terminus first activates URM1 as acyl-adenylate (-COAMP), then the persulfide sulfur on the catalytic cysteine is transferred to URM1 to form thiocarboxylation (-COSH) of its C-terminus. The reaction probably involves hydrogen sulfide that is generated from the persulfide intermediate and that acts as a nucleophile towards URM1. Subsequently, a transient disulfide bond is formed. Does not use thiosulfate as sulfur donor; NFS1 probably acting as a sulfur donor for thiocarboxylation reactions. Prior mcm(5) tRNA modification by the elongator complex is required for 2-thiolation. May also be involved in protein urmylation. In Saccharomyces cerevisiae (strain RM11-1a) (Baker's yeast), this protein is Adenylyltransferase and sulfurtransferase UBA4.